Here is a 179-residue protein sequence, read N- to C-terminus: Large ribosomal subunit protein uL10 (179 aa).

This sequence belongs to the universal ribosomal protein uL10 family. Part of the ribosomal stalk of the 50S ribosomal subunit. The N-terminus interacts with L11 and the large rRNA to form the base of the stalk. The C-terminus forms an elongated spine to which L12 dimers bind in a sequential fashion forming a multimeric L10(L12)X complex.

Forms part of the ribosomal stalk, playing a central role in the interaction of the ribosome with GTP-bound translation factors. The sequence is that of Large ribosomal subunit protein uL10 from Polynucleobacter necessarius subsp. necessarius (strain STIR1).